The following is a 141-amino-acid chain: Large ribosomal subunit protein uL11 (141 aa).

This sequence belongs to the universal ribosomal protein uL11 family. In terms of assembly, part of the ribosomal stalk of the 50S ribosomal subunit. Interacts with L10 and the large rRNA to form the base of the stalk. L10 forms an elongated spine to which L12 dimers bind in a sequential fashion forming a multimeric L10(L12)X complex. One or more lysine residues are methylated.

In terms of biological role, forms part of the ribosomal stalk which helps the ribosome interact with GTP-bound translation factors. The polypeptide is Large ribosomal subunit protein uL11 (Chlamydia pneumoniae (Chlamydophila pneumoniae)).